Reading from the N-terminus, the 409-residue chain is Shaggy-related protein kinase gamma (409 aa).

Ala-2 is modified (N-acetylalanine). The Protein kinase domain occupies 73 to 357; the sequence is YMAERVVGHG…ALDSLVHPFF (285 aa). ATP-binding positions include 79-87 and Lys-102; that span reads VGHGSFGVV. Catalysis depends on Asp-198, which acts as the Proton acceptor. Tyr-233 is modified (phosphotyrosine).

It belongs to the protein kinase superfamily. CMGC Ser/Thr protein kinase family. GSK-3 subfamily. As to quaternary structure, binds to KIB1. Component of a complex made of POLAR, BASL, ASK7/BIN2 and ASK3/SK12. Binds to POLAR and BASL. In terms of processing, autophosphorylated mainly on threonine and serine residues. As to expression, roots, shoots and leaves.

The protein localises to the cytoplasm. It localises to the cell cortex. The enzyme catalyses L-seryl-[protein] + ATP = O-phospho-L-seryl-[protein] + ADP + H(+). The catalysed reaction is L-threonyl-[protein] + ATP = O-phospho-L-threonyl-[protein] + ADP + H(+). Functionally, may mediate extracellular signals to regulate transcription in differentiating cells. Probably involved first at the cortical polarity site, to restrict MAPK signaling and promote asymmetric cell division (ACD), and second in the nucleus of stomatal lineage ground cells (SLGCs) or meristemoids, to limit cell division and to promote differentiation into pavement or stomatal guard cells, respectively. Phosphorylate YDA and SPCH in vitro. The sequence is that of Shaggy-related protein kinase gamma from Arabidopsis thaliana (Mouse-ear cress).